The sequence spans 148 residues: Large ribosomal subunit protein bL9 (148 aa).

It belongs to the bacterial ribosomal protein bL9 family.

Binds to the 23S rRNA. The polypeptide is Large ribosomal subunit protein bL9 (Alkaliphilus oremlandii (strain OhILAs) (Clostridium oremlandii (strain OhILAs))).